The primary structure comprises 549 residues: Dihydroxy-acid dehydratase (549 aa).

Aspartate 78 is a Mg(2+) binding site. Cysteine 119 contributes to the [2Fe-2S] cluster binding site. Residues aspartate 120 and lysine 121 each contribute to the Mg(2+) site. Position 121 is an N6-carboxylysine (lysine 121). Residue cysteine 191 coordinates [2Fe-2S] cluster. Residue glutamate 441 coordinates Mg(2+). Serine 466 serves as the catalytic Proton acceptor.

Belongs to the IlvD/Edd family. As to quaternary structure, homodimer. The cofactor is [2Fe-2S] cluster. Mg(2+) serves as cofactor.

It catalyses the reaction (2R)-2,3-dihydroxy-3-methylbutanoate = 3-methyl-2-oxobutanoate + H2O. The enzyme catalyses (2R,3R)-2,3-dihydroxy-3-methylpentanoate = (S)-3-methyl-2-oxopentanoate + H2O. It functions in the pathway amino-acid biosynthesis; L-isoleucine biosynthesis; L-isoleucine from 2-oxobutanoate: step 3/4. It participates in amino-acid biosynthesis; L-valine biosynthesis; L-valine from pyruvate: step 3/4. In terms of biological role, functions in the biosynthesis of branched-chain amino acids. Catalyzes the dehydration of (2R,3R)-2,3-dihydroxy-3-methylpentanoate (2,3-dihydroxy-3-methylvalerate) into 2-oxo-3-methylpentanoate (2-oxo-3-methylvalerate) and of (2R)-2,3-dihydroxy-3-methylbutanoate (2,3-dihydroxyisovalerate) into 2-oxo-3-methylbutanoate (2-oxoisovalerate), the penultimate precursor to L-isoleucine and L-valine, respectively. The chain is Dihydroxy-acid dehydratase from Methanothermobacter thermautotrophicus (strain ATCC 29096 / DSM 1053 / JCM 10044 / NBRC 100330 / Delta H) (Methanobacterium thermoautotrophicum).